The primary structure comprises 241 residues: Probable transcriptional regulatory protein CV_3123 (241 aa).

It belongs to the TACO1 family.

It is found in the cytoplasm. In Chromobacterium violaceum (strain ATCC 12472 / DSM 30191 / JCM 1249 / CCUG 213 / NBRC 12614 / NCIMB 9131 / NCTC 9757 / MK), this protein is Probable transcriptional regulatory protein CV_3123.